A 549-amino-acid chain; its full sequence is Glucose-6-phosphate isomerase (549 aa).

Catalysis depends on Glu-355, which acts as the Proton donor. Catalysis depends on residues His-387 and Lys-515.

This sequence belongs to the GPI family.

The protein localises to the cytoplasm. The enzyme catalyses alpha-D-glucose 6-phosphate = beta-D-fructose 6-phosphate. Its pathway is carbohydrate biosynthesis; gluconeogenesis. The protein operates within carbohydrate degradation; glycolysis; D-glyceraldehyde 3-phosphate and glycerone phosphate from D-glucose: step 2/4. Catalyzes the reversible isomerization of glucose-6-phosphate to fructose-6-phosphate. The polypeptide is Glucose-6-phosphate isomerase (Histophilus somni (strain 2336) (Haemophilus somnus)).